A 27-amino-acid polypeptide reads, in one-letter code: Endoglucanase gh5 (27 aa).

Glu6 (nucleophile) is an active-site residue.

It carries out the reaction Endohydrolysis of (1-&gt;4)-beta-D-glucosidic linkages in cellulose, lichenin and cereal beta-D-glucans.. Its activity is regulated as follows. Activity is stimulated by zinc ions, potassium ions and DTT. Activity is inhibited by manganese and chloride ions. Endoglucanase (EG) that cleaves the internal beta-1,4-glucosidic bonds in cellulose. This is Endoglucanase gh5 from Fomes meliae (Fomitopsis meliae).